The primary structure comprises 425 residues: Kynurenine/alpha-aminoadipate aminotransferase, mitochondrial (425 aa).

A mitochondrion-targeting transit peptide spans M1–A29. Substrate is bound at residue R20. The residue at position 69 (K69) is an N6-acetyllysine. Substrate contacts are provided by Y74 and Y142. The interval W178–L208 is disordered. K179 carries the post-translational modification N6-acetyllysine. Residues P198–L208 show a composition bias toward polar residues. N202 lines the substrate pocket. An N6-(pyridoxal phosphate)lysine; alternate modification is found at K263. Residues K263 and K339 each carry the N6-acetyllysine; alternate modification. 2 positions are modified to N6-succinyllysine; alternate: K263 and K339. R399 is a binding site for substrate. K422 is modified (N6-acetyllysine).

It belongs to the class-I pyridoxal-phosphate-dependent aminotransferase family. Homodimer. Pyridoxal 5'-phosphate is required as a cofactor.

The protein resides in the mitochondrion. The catalysed reaction is L-kynurenine + 2-oxoglutarate = kynurenate + L-glutamate + H2O. It catalyses the reaction L-2-aminoadipate + 2-oxoglutarate = 2-oxoadipate + L-glutamate. The enzyme catalyses glycine + 2-oxoglutarate = glyoxylate + L-glutamate. It carries out the reaction L-kynurenine + glyoxylate = kynurenate + glycine + H2O. The catalysed reaction is 3-hydroxy-L-kynurenine + glyoxylate = xanthurenate + glycine + H2O. It catalyses the reaction 2-oxohexanoate + L-kynurenine = L-2-aminohexanoate + kynurenate + H2O. The enzyme catalyses 3-phenylpyruvate + L-kynurenine = kynurenate + L-phenylalanine + H2O. It carries out the reaction 4-methylsulfanyl-2-oxobutanoate + L-kynurenine = kynurenate + L-methionine + H2O. The catalysed reaction is 2-oxo-3-sulfanylpropanoate + L-kynurenine = kynurenate + L-cysteine + H2O. It catalyses the reaction indole-3-pyruvate + L-kynurenine = kynurenate + L-tryptophan + H2O. The enzyme catalyses 2-oxopentanoate + L-kynurenine = L-2-aminopentanoate + kynurenate + H2O. It carries out the reaction 4-methyl-2-oxopentanoate + L-kynurenine = kynurenate + L-leucine + H2O. The catalysed reaction is glyoxylate + L-methionine = 4-methylsulfanyl-2-oxobutanoate + glycine. It catalyses the reaction L-2-aminoadipate + glyoxylate = 2-oxoadipate + glycine. The enzyme catalyses L-tyrosine + glyoxylate = 3-(4-hydroxyphenyl)pyruvate + glycine. It carries out the reaction glyoxylate + L-phenylalanine = 3-phenylpyruvate + glycine. The catalysed reaction is L-tryptophan + glyoxylate = indole-3-pyruvate + glycine. It catalyses the reaction L-leucine + glyoxylate = 4-methyl-2-oxopentanoate + glycine. The enzyme catalyses 2-oxobutanoate + L-kynurenine = (2S)-2-aminobutanoate + kynurenate + H2O. It carries out the reaction 2-oxoadipate + L-kynurenine = L-2-aminoadipate + kynurenate + H2O. It functions in the pathway amino-acid degradation; L-lysine degradation via saccharopine pathway; glutaryl-CoA from L-lysine: step 4/6. In terms of biological role, transaminase with broad substrate specificity. Has transaminase activity towards aminoadipate, kynurenine, methionine and glutamate. Shows activity also towards tryptophan, aspartate and hydroxykynurenine. Accepts a variety of oxo-acids as amino-group acceptors, with a preference for 2-oxoglutarate, 2-oxocaproic acid, phenylpyruvate and alpha-oxo-gamma-methiol butyric acid. Can also use glyoxylate as amino-group acceptor (in vitro). The sequence is that of Kynurenine/alpha-aminoadipate aminotransferase, mitochondrial from Bos taurus (Bovine).